A 585-amino-acid chain; its full sequence is Aspartate--tRNA ligase (585 aa).

Residue glutamate 173 participates in L-aspartate binding. The aspartate stretch occupies residues 197 to 200 (QTLK). Residue arginine 219 coordinates L-aspartate. ATP-binding positions include 219 to 221 (RDE) and glutamine 228. Histidine 446 contacts L-aspartate. Glutamate 480 is a binding site for ATP. Arginine 487 contributes to the L-aspartate binding site. 532-535 (GLDR) contributes to the ATP binding site.

This sequence belongs to the class-II aminoacyl-tRNA synthetase family. Type 1 subfamily. Homodimer.

Its subcellular location is the cytoplasm. The enzyme catalyses tRNA(Asp) + L-aspartate + ATP = L-aspartyl-tRNA(Asp) + AMP + diphosphate. Catalyzes the attachment of L-aspartate to tRNA(Asp) in a two-step reaction: L-aspartate is first activated by ATP to form Asp-AMP and then transferred to the acceptor end of tRNA(Asp). The sequence is that of Aspartate--tRNA ligase from Bacteroides fragilis (strain YCH46).